Consider the following 220-residue polypeptide: ATP-dependent dethiobiotin synthetase BioD (220 aa).

13-18 (EVGKTV) provides a ligand contact to ATP. A Mg(2+)-binding site is contributed by Thr17. Residue Lys38 is part of the active site. Ser42 is a substrate binding site. Residues Asp55, 116–119 (EGAG), 176–177 (NR), and Asn212 each bind ATP. Mg(2+) is bound by residues Asp55 and Glu116.

This sequence belongs to the dethiobiotin synthetase family. As to quaternary structure, homodimer. Mg(2+) is required as a cofactor.

Its subcellular location is the cytoplasm. The enzyme catalyses (7R,8S)-7,8-diammoniononanoate + CO2 + ATP = (4R,5S)-dethiobiotin + ADP + phosphate + 3 H(+). The protein operates within cofactor biosynthesis; biotin biosynthesis; biotin from 7,8-diaminononanoate: step 1/2. In terms of biological role, catalyzes a mechanistically unusual reaction, the ATP-dependent insertion of CO2 between the N7 and N8 nitrogen atoms of 7,8-diaminopelargonic acid (DAPA, also called 7,8-diammoniononanoate) to form a ureido ring. This is ATP-dependent dethiobiotin synthetase BioD from Photobacterium profundum (strain SS9).